A 431-amino-acid polypeptide reads, in one-letter code: Sorting nexin-31 (431 aa).

Residues 1-107 (MHICIPVTEE…DYFRKLQMDT (107 aa)) enclose the PX domain.

It belongs to the sorting nexin family.

May be involved in protein trafficking. The sequence is that of Sorting nexin-31 (snx31) from Xenopus laevis (African clawed frog).